The sequence spans 492 residues: Glutamyl-tRNA(Gln) amidotransferase subunit A (492 aa).

Active-site charge relay system residues include lysine 78 and serine 158. The active-site Acyl-ester intermediate is serine 182.

It belongs to the amidase family. GatA subfamily. Heterotrimer of A, B and C subunits.

The enzyme catalyses L-glutamyl-tRNA(Gln) + L-glutamine + ATP + H2O = L-glutaminyl-tRNA(Gln) + L-glutamate + ADP + phosphate + H(+). Functionally, allows the formation of correctly charged Gln-tRNA(Gln) through the transamidation of misacylated Glu-tRNA(Gln) in organisms which lack glutaminyl-tRNA synthetase. The reaction takes place in the presence of glutamine and ATP through an activated gamma-phospho-Glu-tRNA(Gln). The chain is Glutamyl-tRNA(Gln) amidotransferase subunit A from Rhodopseudomonas palustris (strain BisB5).